A 237-amino-acid chain; its full sequence is Uridylate kinase (237 aa).

12–15 serves as a coordination point for ATP; it reads KLSG. The segment at 20–25 is involved in allosteric activation by GTP; sequence GAEGFG. Residue Gly-54 participates in UMP binding. ATP-binding residues include Gly-55 and Arg-59. Residues Asp-74 and 135–142 contribute to the UMP site; that span reads TGSPFFTT. The ATP site is built by Thr-162, Tyr-168, and Asp-171.

Belongs to the UMP kinase family. Homohexamer.

The protein localises to the cytoplasm. It carries out the reaction UMP + ATP = UDP + ADP. It participates in pyrimidine metabolism; CTP biosynthesis via de novo pathway; UDP from UMP (UMPK route): step 1/1. Its activity is regulated as follows. Allosterically activated by GTP. Inhibited by UTP. In terms of biological role, catalyzes the reversible phosphorylation of UMP to UDP. This Actinobacillus succinogenes (strain ATCC 55618 / DSM 22257 / CCUG 43843 / 130Z) protein is Uridylate kinase.